We begin with the raw amino-acid sequence, 332 residues long: Ribosomal RNA small subunit methyltransferase C (332 aa).

This sequence belongs to the methyltransferase superfamily. RsmC family. As to quaternary structure, monomer.

It is found in the cytoplasm. The catalysed reaction is guanosine(1207) in 16S rRNA + S-adenosyl-L-methionine = N(2)-methylguanosine(1207) in 16S rRNA + S-adenosyl-L-homocysteine + H(+). In terms of biological role, specifically methylates the guanine in position 1207 of 16S rRNA in the 30S particle. The sequence is that of Ribosomal RNA small subunit methyltransferase C from Stutzerimonas stutzeri (strain A1501) (Pseudomonas stutzeri).